The sequence spans 160 residues: SsrA-binding protein (160 aa).

Residues 1 to 23 form a disordered region; it reads MARKKKQDKGQGPKTIAQNRRAR.

The protein belongs to the SmpB family.

It localises to the cytoplasm. In terms of biological role, required for rescue of stalled ribosomes mediated by trans-translation. Binds to transfer-messenger RNA (tmRNA), required for stable association of tmRNA with ribosomes. tmRNA and SmpB together mimic tRNA shape, replacing the anticodon stem-loop with SmpB. tmRNA is encoded by the ssrA gene; the 2 termini fold to resemble tRNA(Ala) and it encodes a 'tag peptide', a short internal open reading frame. During trans-translation Ala-aminoacylated tmRNA acts like a tRNA, entering the A-site of stalled ribosomes, displacing the stalled mRNA. The ribosome then switches to translate the ORF on the tmRNA; the nascent peptide is terminated with the 'tag peptide' encoded by the tmRNA and targeted for degradation. The ribosome is freed to recommence translation, which seems to be the essential function of trans-translation. This is SsrA-binding protein from Thermobifida fusca (strain YX).